The chain runs to 272 residues: 3-methyl-2-oxobutanoate hydroxymethyltransferase (272 aa).

Residues aspartate 43 and aspartate 82 each coordinate Mg(2+). Residues 43-44 (DS), aspartate 82, and lysine 112 each bind 3-methyl-2-oxobutanoate. Residue glutamate 114 participates in Mg(2+) binding. Glutamate 179 acts as the Proton acceptor in catalysis.

The protein belongs to the PanB family. As to quaternary structure, homodecamer; pentamer of dimers. Mg(2+) serves as cofactor.

It is found in the cytoplasm. It carries out the reaction 3-methyl-2-oxobutanoate + (6R)-5,10-methylene-5,6,7,8-tetrahydrofolate + H2O = 2-dehydropantoate + (6S)-5,6,7,8-tetrahydrofolate. It functions in the pathway cofactor biosynthesis; (R)-pantothenate biosynthesis; (R)-pantoate from 3-methyl-2-oxobutanoate: step 1/2. Functionally, catalyzes the reversible reaction in which hydroxymethyl group from 5,10-methylenetetrahydrofolate is transferred onto alpha-ketoisovalerate to form ketopantoate. The sequence is that of 3-methyl-2-oxobutanoate hydroxymethyltransferase from Staphylococcus aureus (strain JH1).